The primary structure comprises 65 residues: Large ribosomal subunit protein bL28 (65 aa).

The tract at residues 1-26 (MARRDDLTNKGPMSGNKRSHALNATK) is disordered. The segment covering 17–26 (KRSHALNATK) has biased composition (basic residues).

This sequence belongs to the bacterial ribosomal protein bL28 family.

This Mycoplasma mobile (strain ATCC 43663 / 163K / NCTC 11711) (Mesomycoplasma mobile) protein is Large ribosomal subunit protein bL28.